The following is a 363-amino-acid chain: MNGSPTPKRYSSKSSRLYDDYYNIPYQYSNPTPMNRDYNDVGSRINADKLVPEEYKRNTEFINKAVQQNKELNFKLREKQNEIFELKKIAETLRSKLEKYVDITKKLENQNLNLQIKISDLEKKLSDANSTFKEMRFPKVKDPMVDDDPVSENYDQINVPKHRAPDATGNPRTTNKVSNTSDQDSRLKAIERTLSVLTNYVMRSEDGNNDRMSPLPSPLNTISPINNRLNFQEPKRYNPTVKVNPSDDDIMMYESAELKRVEEEIEELKRKILVRKKHDLRKLSLNNQLQELQSMMDGDDNIKLDNVSKHNHATHRHSSQSSRDYSPSSDACLECSNDLYEKNRVKPENNMSETFATPTPNNX.

A coiled-coil region spans residues isoleucine 62–arginine 136. The disordered stretch occupies residues proline 160–aspartate 184. Polar residues predominate over residues asparagine 170–aspartate 182. Serine 213, serine 217, serine 284, and serine 329 each carry phosphoserine. Residues aspartate 248–aspartate 297 are a coiled coil. Disordered regions lie at residues histidine 310–alanine 331 and asparagine 343–residue 363. Residues serine 319 to serine 329 show a composition bias toward low complexity. Positions asparagine 349–residue 363 are enriched in polar residues.

This sequence belongs to the SPC42 family. As to quaternary structure, component of the SPC110 complex containing at least CMD1, SPC29, SPC42 and SCP110.

The protein resides in the nucleus. It localises to the cytoplasm. Its subcellular location is the cytoskeleton. The protein localises to the microtubule organizing center. It is found in the spindle pole body. Forms a polymeric layer at the periphery of the spindle pole body (SPB) central plaque which has an essential function during SPB duplication and may facilitate attachment of the SPB to the nuclear membrane. This Saccharomyces cerevisiae (strain FostersB) (Baker's yeast) protein is Spindle pole body component SPC42 (SPC42).